We begin with the raw amino-acid sequence, 27 residues long: AnmTX Sco 9a-1 (27 aa).

Residue Pro-6 is modified to Hydroxyproline. Cystine bridges form between Cys-7–Cys-18 and Cys-10–Cys-25.

Has analgesic and anti-inflammatory activity in vivo. At a dose of 0.1 and 1 mg/kg, exhibits anti-inflammatory activity by reducing the volume of edema during 24 h better than the nonsteroidal anti-inflammatory drug, Diclofenac, at dose of 1 mg/kg in a mouse model of acute local lambda-carrageenan-induced inflammation. At a dose of 1 mg/kg, reduces the content of tumor necrosis factor-alpha (TNF-alpha). Demonstrates a significant analgesic effect on acute pain sensitivity in the carrageenan-induced thermal hyperalgesia model at doses of 0.1 and 1 mg/kg. Not toxic in mice, however stimulates exploratory motivation and active search behavior, and demonstrates an anti-anxiety effect. Does not exhibit any effect on currents of rat acid-sensing ion channels ASIC1a or ASIC3. This Stomphia coccinea (Spotted swimming anemone) protein is AnmTX Sco 9a-1.